The following is an 85-amino-acid chain: Large ribosomal subunit protein bL27 (85 aa).

Positions 1 to 21 (MAHKKGVGSTRNGRDSESKRL) are disordered.

The protein belongs to the bacterial ribosomal protein bL27 family.

In Geobacter sulfurreducens (strain ATCC 51573 / DSM 12127 / PCA), this protein is Large ribosomal subunit protein bL27.